Reading from the N-terminus, the 169-residue chain is Transcription antitermination protein NusB (169 aa).

Positions 147 to 169 (RGLIDQSFSRPQKPESEATEIEE) are disordered.

The protein belongs to the NusB family.

Involved in transcription antitermination. Required for transcription of ribosomal RNA (rRNA) genes. Binds specifically to the boxA antiterminator sequence of the ribosomal RNA (rrn) operons. The sequence is that of Transcription antitermination protein NusB from Chlorobium chlorochromatii (strain CaD3).